Here is a 402-residue protein sequence, read N- to C-terminus: UDP-N-acetylmuramoylalanine--D-glutamate ligase (402 aa).

ATP is bound at residue 97-103 (GTNGKTT).

It belongs to the MurCDEF family.

It localises to the cytoplasm. It catalyses the reaction UDP-N-acetyl-alpha-D-muramoyl-L-alanine + D-glutamate + ATP = UDP-N-acetyl-alpha-D-muramoyl-L-alanyl-D-glutamate + ADP + phosphate + H(+). It functions in the pathway cell wall biogenesis; peptidoglycan biosynthesis. Cell wall formation. Catalyzes the addition of glutamate to the nucleotide precursor UDP-N-acetylmuramoyl-L-alanine (UMA). This Campylobacter jejuni (strain RM1221) protein is UDP-N-acetylmuramoylalanine--D-glutamate ligase.